Reading from the N-terminus, the 90-residue chain is Barrier-to-autointegration factor (90 aa).

2 positions are modified to phosphoserine: serine 2 and serine 3. Threonine 4 carries the post-translational modification Phosphothreonine. Serine 5 bears the Phosphoserine mark.

Belongs to the BAF family. As to quaternary structure, homodimer.

The protein localises to the nucleus. It localises to the chromosome. The protein resides in the nucleus envelope. Its subcellular location is the cytoplasm. Its function is as follows. Non-specific DNA-binding protein that plays key roles in mitotic nuclear reassembly, chromatin organization, DNA damage response, gene expression and intrinsic immunity against foreign DNA. Contains two non-specific double-stranded DNA (dsDNA)-binding sites which promote DNA cross-bridging. Plays a key role in nuclear membrane reformation at the end of mitosis by driving formation of a single nucleus in a spindle-independent manner. Transiently cross-bridges anaphase chromosomes via its ability to bridge distant DNA sites, leading to the formation of a dense chromatin network at the chromosome ensemble surface that limits membranes to the surface. Also acts as a negative regulator of innate immune activation by restricting CGAS activity toward self-DNA upon acute loss of nuclear membrane integrity. Outcompetes CGAS for DNA-binding, thereby preventing CGAS activation and subsequent damaging autoinflammatory responses. Also involved in DNA damage response; acts by inhibiting the ADP-ribosyltransferase activity of PARP1. Involved in the recognition of exogenous dsDNA in the cytosol: associates with exogenous dsDNA immediately after its appearance in the cytosol at endosome breakdown and is required to avoid autophagy. The sequence is that of Barrier-to-autointegration factor (banf1) from Danio rerio (Zebrafish).